Reading from the N-terminus, the 60-residue chain is Cytotoxin 5 (60 aa).

Disulfide bonds link C3–C21, C14–C38, C42–C53, and C54–C59.

The protein belongs to the three-finger toxin family. Short-chain subfamily. Type IA cytotoxin sub-subfamily. As to quaternary structure, monomer in solution; Homodimer and oligomer in the presence of negatively charged lipids forming a pore with a size ranging between 20 and 30 Angstroms. As to expression, expressed by the venom gland.

The protein resides in the secreted. It is found in the target cell membrane. Its function is as follows. Shows cytolytic activity on many different cells by forming pore in lipid membranes. In vivo, increases heart rate or kills the animal by cardiac arrest. In addition, it binds to heparin with high affinity, interacts with Kv channel-interacting protein 1 (KCNIP1) in a calcium-independent manner, and binds to integrin alpha-V/beta-3 (ITGAV/ITGB3) with moderate affinity. This is Cytotoxin 5 from Naja annulifera (Banded Egyptian cobra).